The primary structure comprises 146 residues: Large ribosomal subunit protein uL15 (146 aa).

The tract at residues 1-51 (MKLHELKPAKGSRKVRNRVGRGTSSGNGKTSGRGQKGQKARSGGGVRLGFE) is disordered. Residues 10-19 (KGSRKVRNRV) show a composition bias toward basic residues. Composition is skewed to gly residues over residues 23-35 (TSSGNGKTSGRGQ) and 42-51 (SGGGVRLGFE).

It belongs to the universal ribosomal protein uL15 family. As to quaternary structure, part of the 50S ribosomal subunit.

Its function is as follows. Binds to the 23S rRNA. The chain is Large ribosomal subunit protein uL15 from Streptococcus equi subsp. equi (strain 4047).